The chain runs to 116 residues: Large ribosomal subunit protein bL17 (116 aa).

It belongs to the bacterial ribosomal protein bL17 family. In terms of assembly, part of the 50S ribosomal subunit. Contacts protein L32.

The sequence is that of Large ribosomal subunit protein bL17 from Cyanothece sp. (strain PCC 7425 / ATCC 29141).